Reading from the N-terminus, the 651-residue chain is DNA mismatch repair protein MutL (651 aa).

Residues 336 to 398 are disordered; that stretch reads RLDMTEPETG…ANSGYQPENP (63 aa). Over residues 385 to 394 the composition is skewed to polar residues; that stretch reads ARESANSGYQ.

Belongs to the DNA mismatch repair MutL/HexB family.

Its function is as follows. This protein is involved in the repair of mismatches in DNA. It is required for dam-dependent methyl-directed DNA mismatch repair. May act as a 'molecular matchmaker', a protein that promotes the formation of a stable complex between two or more DNA-binding proteins in an ATP-dependent manner without itself being part of a final effector complex. This Pectobacterium atrosepticum (strain SCRI 1043 / ATCC BAA-672) (Erwinia carotovora subsp. atroseptica) protein is DNA mismatch repair protein MutL.